We begin with the raw amino-acid sequence, 497 residues long: MTASAILACQKYPVTTIIGLEVHVQLKTQTKLFCGCTTEFGAPPNTQVCPVCLGMPGALPVMNREAIALSVKTGLALNCDIPPLTKWDRKQYFYPDLPKGYQISQFDLPICADGHLAISTDDGETERRIGLVRAHLEEDAGKSMHDEASGISDTKIDLNRCGTPLLEIVSQPDLRSADEAKAYLSELKLLLTHLKVSDCEMQEGSLRVDANVNLHIDVEGKKIATPIVEIKNLNSFRNVQRAIDYEVQRQLVDWEENRQTIDDAPKTTRGWDDSAEQTFAQREKEESADYRYFPDPDLLPVRLPREYVESISESLGELPAVTRERLQTQHGIKPYDADVIVNQGPDVIDYFETAVGASGDGRRTSSWMMQDVMRTMKERSIDIDAFPIPAERLGELIRMIADGKLDNNRARDVFEHLLTHDESIEQATKSLGIEAVDDDALESLCKELLAANPQVVEDVKGGKQQAVGALIGQAKKKNPNASPQAVRQLLIDLIAKM.

The protein belongs to the GatB/GatE family. GatB subfamily. Heterotrimer of A, B and C subunits.

It catalyses the reaction L-glutamyl-tRNA(Gln) + L-glutamine + ATP + H2O = L-glutaminyl-tRNA(Gln) + L-glutamate + ADP + phosphate + H(+). The enzyme catalyses L-aspartyl-tRNA(Asn) + L-glutamine + ATP + H2O = L-asparaginyl-tRNA(Asn) + L-glutamate + ADP + phosphate + 2 H(+). Functionally, allows the formation of correctly charged Asn-tRNA(Asn) or Gln-tRNA(Gln) through the transamidation of misacylated Asp-tRNA(Asn) or Glu-tRNA(Gln) in organisms which lack either or both of asparaginyl-tRNA or glutaminyl-tRNA synthetases. The reaction takes place in the presence of glutamine and ATP through an activated phospho-Asp-tRNA(Asn) or phospho-Glu-tRNA(Gln). The chain is Aspartyl/glutamyl-tRNA(Asn/Gln) amidotransferase subunit B from Rhodopirellula baltica (strain DSM 10527 / NCIMB 13988 / SH1).